The primary structure comprises 439 residues: Probable RNA-binding protein 23 (439 aa).

The tract at residues methionine 13–serine 159 is disordered. The span at proline 17 to tyrosine 34 shows a compositional bias: basic and acidic residues. Low complexity predominate over residues serine 36–glutamate 57. A compositionally biased stretch (basic residues) spans lysine 60–arginine 90. Residues arginine 103–histidine 125 are compositionally biased toward basic and acidic residues. Serine 128 and serine 149 each carry phosphoserine. Basic and acidic residues predominate over residues histidine 144 to serine 159. RRM domains are found at residues arginine 166–alanine 243 and methionine 263–glutamate 341.

This sequence belongs to the splicing factor SR family. Post-translationally, aryl sulfonamide anticancer drugs, such as indisulam (E7070) or E7820, promote ubiquitination and subsequent degradation by the DCX(DCAF15) complex. Aryl sulfonamide anticancer drugs change the substrate specificity of DCAF15 by acting as a molecular glue that promotes binding between DCAF15 and weak affinity interactor RBM23. As to expression, highly expressed in placenta, liver, skeletal muscle, heart and kidney. Expressed at lower levels in the colon, thymus, spleen, small intestine and lung.

It localises to the nucleus. Functionally, RNA-binding protein that acts both as a transcription coactivator and pre-mRNA splicing factor. Regulates steroid hormone receptor-mediated transcription, independently of the pre-mRNA splicing factor activity. The polypeptide is Probable RNA-binding protein 23 (Homo sapiens (Human)).